Consider the following 630-residue polypeptide: Transposase B from transposon Tn554 (630 aa).

Residues threonine 216 to leucine 302 form the Core-binding (CB) domain. One can recognise a Tyr recombinase domain in the interval alanine 326–threonine 513. Catalysis depends on residues arginine 363, lysine 391, histidine 465, arginine 468, and histidine 491. The O-(3'-phospho-DNA)-tyrosine intermediate role is filled by tyrosine 500.

The protein belongs to the 'phage' integrase family.

One of three proteins encoded by transposon Tn554 required for its transposition. The polypeptide is Transposase B from transposon Tn554 (tnpB1) (Staphylococcus aureus (strain Mu50 / ATCC 700699)).